The primary structure comprises 89 residues: Large ribosomal subunit protein bL27 (89 aa).

The tract at residues 1–21 (MAHKKAGGSSRNGRDSAGRRL) is disordered.

The protein belongs to the bacterial ribosomal protein bL27 family.

The polypeptide is Large ribosomal subunit protein bL27 (Roseobacter denitrificans (strain ATCC 33942 / OCh 114) (Erythrobacter sp. (strain OCh 114))).